The sequence spans 566 residues: OTU domain-containing protein 5 (566 aa).

2 disordered regions span residues 1-117 (MTIL…GDAL) and 145-175 (GPGH…GAGY). A compositionally biased stretch (pro residues) spans 11–30 (PPDADPANEPPPPGPLPPAP). The span at 34-47 (AGVGVGGGGTGVGG) shows a compositional bias: gly residues. The segment covering 63-75 (ASPPPQGPLPGPP) has biased composition (pro residues). A Phosphoserine modification is found at serine 64. Positions 84-97 (AVPPGAVAGPRPQQ) are enriched in low complexity. Over residues 105-115 (GPGGPGGGPGD) the composition is skewed to gly residues. The residue at position 165 (serine 165) is a Phosphoserine. The residue at position 175 (tyrosine 175) is a Phosphotyrosine. Serine 177 bears the Phosphoserine mark. At threonine 195 the chain carries Phosphothreonine. The OTU domain maps to 213-336 (FIIKQMKEDG…NIHYNSVVNP (124 aa)). Residues 218–224 (MKEDGAC) form a cys-loop region. Aspartate 221 is a catalytic residue. Residue cysteine 224 is the Nucleophile of the active site. Positions 273 to 283 (KRKNNCHGNHI) are variable-loop. Serine 323 carries the phosphoserine modification. The segment at 324–329 (YHRNIH) is his-loop. Residue histidine 329 is part of the active site. 2 positions are modified to phosphoserine: serine 332 and serine 370. The segment at 413–499 (ARQVRGPSQP…TSSQFSAGGD (87 aa)) is disordered. Composition is skewed to low complexity over residues 425–438 (ASAT…AASS) and 445–457 (SRSP…ASSP). Serine 447 is modified (phosphoserine). Residue threonine 502 is modified to Phosphothreonine. Position 503 is a phosphoserine (serine 503).

The protein belongs to the peptidase C85 family. As to quaternary structure, interacts with TRAF3. Phosphorylation at Ser-177 is required for deubiquitinating activity. Phosphorylation at Ser-323, Ser-332 and Ser-503 by MTOR promotes its activity.

It localises to the nucleus. It carries out the reaction Thiol-dependent hydrolysis of ester, thioester, amide, peptide and isopeptide bonds formed by the C-terminal Gly of ubiquitin (a 76-residue protein attached to proteins as an intracellular targeting signal).. Inhibited by N-ethyl-maleimide (NEM). Its function is as follows. Deubiquitinating enzyme that functions as a negative regulator of the innate immune system. Has peptidase activity towards 'Lys-48'- and 'Lys-63'-linked polyubiquitin chains. Can also cleave 'Lys-11'-linked ubiquitin chains (in vitro). Acts via TRAF3 deubiquitination and subsequent suppression of type I interferon (IFN) production. Controls neuroectodermal differentiation through cleaving 'Lys-48'-linked ubiquitin chains to counteract degradation of select chromatin regulators such as ARID1A, HDAC2 and HCF1. Acts as a positive regulator of mTORC1 and mTORC2 signaling following phosphorylation by MTOR: acts by mediating deubiquitination of BTRC, leading to its stability. This is OTU domain-containing protein 5 from Mus musculus (Mouse).